The primary structure comprises 217 residues: Ribonuclease T (217 aa).

Residues 20-195 (VVVDVETAGL…YDTERTAMLF (176 aa)) form the Exonuclease domain. Mg(2+) contacts are provided by Asp23, Glu25, His182, and Asp187. The active-site Proton donor/acceptor is the His182.

This sequence belongs to the RNase T family. As to quaternary structure, homodimer. Requires Mg(2+) as cofactor.

Trims short 3' overhangs of a variety of RNA species, leaving a one or two nucleotide 3' overhang. Responsible for the end-turnover of tRNA: specifically removes the terminal AMP residue from uncharged tRNA (tRNA-C-C-A). Also appears to be involved in tRNA biosynthesis. This Blochmanniella pennsylvanica (strain BPEN) protein is Ribonuclease T.